A 76-amino-acid polypeptide reads, in one-letter code: Cytochrome c oxidase subunit 6C-1 (76 aa).

The Mitochondrial matrix segment spans residues 4–14 (GALLPKPQMHD). A helical transmembrane segment spans residues 15-55 (PLSKRLWVHIVGAFIVDLGVAAAHKFGAAKPRKKAYADFYR). The Mitochondrial intermembrane portion of the chain corresponds to 56–76 (NHDPMKDFDEMRKAGVFRSVK).

Belongs to the cytochrome c oxidase subunit 6c family. In terms of assembly, component of the cytochrome c oxidase (complex IV, CIV), a multisubunit enzyme composed of 14 subunits. The complex is composed of a catalytic core of 3 subunits MT-CO1, MT-CO2 and MT-CO3, encoded in the mitochondrial DNA, and 11 supernumerary subunits COX4I, COX5A, COX5B, COX6A, COX6B, COX6C, COX7A, COX7B, COX7C, COX8 and NDUFA4, which are encoded in the nuclear genome. The complex exists as a monomer or a dimer and forms supercomplexes (SCs) in the inner mitochondrial membrane with NADH-ubiquinone oxidoreductase (complex I, CI) and ubiquinol-cytochrome c oxidoreductase (cytochrome b-c1 complex, complex III, CIII), resulting in different assemblies (supercomplex SCI(1)III(2)IV(1) and megacomplex MCI(2)III(2)IV(2)).

It localises to the mitochondrion inner membrane. It functions in the pathway energy metabolism; oxidative phosphorylation. Component of the cytochrome c oxidase, the last enzyme in the mitochondrial electron transport chain which drives oxidative phosphorylation. The respiratory chain contains 3 multisubunit complexes succinate dehydrogenase (complex II, CII), ubiquinol-cytochrome c oxidoreductase (cytochrome b-c1 complex, complex III, CIII) and cytochrome c oxidase (complex IV, CIV), that cooperate to transfer electrons derived from NADH and succinate to molecular oxygen, creating an electrochemical gradient over the inner membrane that drives transmembrane transport and the ATP synthase. Cytochrome c oxidase is the component of the respiratory chain that catalyzes the reduction of oxygen to water. Electrons originating from reduced cytochrome c in the intermembrane space (IMS) are transferred via the dinuclear copper A center (CU(A)) of subunit 2 and heme A of subunit 1 to the active site in subunit 1, a binuclear center (BNC) formed by heme A3 and copper B (CU(B)). The BNC reduces molecular oxygen to 2 water molecules using 4 electrons from cytochrome c in the IMS and 4 protons from the mitochondrial matrix. In Rattus norvegicus (Rat), this protein is Cytochrome c oxidase subunit 6C-1 (Cox6c1).